The primary structure comprises 322 residues: tRNA-dihydrouridine(16) synthase (322 aa).

FMN contacts are provided by residues 8-10 (PME) and glutamine 69. Cysteine 99 acts as the Proton donor in catalysis. FMN is bound by residues lysine 140, 200-202 (NGD), and 224-225 (GR).

This sequence belongs to the Dus family. DusC subfamily. FMN is required as a cofactor.

The catalysed reaction is 5,6-dihydrouridine(16) in tRNA + NADP(+) = uridine(16) in tRNA + NADPH + H(+). It carries out the reaction 5,6-dihydrouridine(16) in tRNA + NAD(+) = uridine(16) in tRNA + NADH + H(+). Its function is as follows. Catalyzes the synthesis of 5,6-dihydrouridine (D), a modified base found in the D-loop of most tRNAs, via the reduction of the C5-C6 double bond in target uridines. Specifically modifies U16 in tRNAs. The sequence is that of tRNA-dihydrouridine(16) synthase from Cupriavidus necator (strain ATCC 17699 / DSM 428 / KCTC 22496 / NCIMB 10442 / H16 / Stanier 337) (Ralstonia eutropha).